The sequence spans 193 residues: Chaperone protein TorD (193 aa).

The protein belongs to the TorD/DmsD family. TorD subfamily.

The protein resides in the cytoplasm. In terms of biological role, involved in the biogenesis of TorA. Acts on TorA before the insertion of the molybdenum cofactor and, as a result, probably favors a conformation of the apoenzyme that is competent for acquiring the cofactor. The polypeptide is Chaperone protein TorD (Histophilus somni (strain 129Pt) (Haemophilus somnus)).